A 476-amino-acid chain; its full sequence is Cysteine--tRNA ligase (476 aa).

Cys29 lines the Zn(2+) pocket. Positions 31–41 (PTVYDYTHIGH) match the 'HIGH' region motif. Residues Cys209, His234, and Glu238 each contribute to the Zn(2+) site. Positions 266–270 (KMSKS) match the 'KMSKS' region motif. Lys269 is an ATP binding site.

This sequence belongs to the class-I aminoacyl-tRNA synthetase family. Zn(2+) is required as a cofactor.

The protein resides in the cytoplasm. It catalyses the reaction tRNA(Cys) + L-cysteine + ATP = L-cysteinyl-tRNA(Cys) + AMP + diphosphate. In Thermococcus kodakarensis (strain ATCC BAA-918 / JCM 12380 / KOD1) (Pyrococcus kodakaraensis (strain KOD1)), this protein is Cysteine--tRNA ligase.